The primary structure comprises 521 residues: U4/U6 small nuclear ribonucleoprotein Prp4 (521 aa).

Lys-26 carries the post-translational modification N6-acetyllysine. WD repeat units follow at residues 228 to 267 (GDDR…LLHT), 270 to 317 (GHNT…PVAD), 320 to 359 (GHTV…EILH), 362 to 401 (GHSM…CIMF), 404 to 443 (GHLK…CVYT), 446 to 486 (AHQN…PLKT), and 489 to 521 (GHEG…WMAE).

As to quaternary structure, component of the precatalytic spliceosome (spliceosome B complex). Component of the U4/U6-U5 tri-snRNP complex, a building block of the precatalytic spliceosome (spliceosome B complex). The U4/U6-U5 tri-snRNP complex is composed of the U4, U6 and U5 snRNAs and at least PRPF3, PRPF4, PRPF6, PRPF8, PRPF31, SNRNP200, TXNL4A, SNRNP40, SNRPB, SNRPD1, SNRPD2, SNRPD3, SNRPE, SNRPF, SNRPG, DDX23, CD2BP2, PPIH, SNU13, EFTUD2, SART1 and USP39, plus LSM2, LSM3, LSM4, LSM5, LSM6, LSM7 and LSM8. Interacts directly with PRPF18, PPIH and PRPF3. Part of a heteromeric complex containing PPIH, PRPF3 and PRPF4 that is stable in the absence of RNA. Interacts with ERCC6.

It localises to the nucleus. The protein localises to the nucleus speckle. Functionally, plays a role in pre-mRNA splicing as component of the U4/U6-U5 tri-snRNP complex that is involved in spliceosome assembly, and as component of the precatalytic spliceosome (spliceosome B complex). The protein is U4/U6 small nuclear ribonucleoprotein Prp4 (Prpf4) of Mus musculus (Mouse).